Consider the following 537-residue polypeptide: Glutamyl-tRNA reductase, chloroplastic (537 aa).

A chloroplast-targeting transit peptide spans 1–48; the sequence is MMASTTSATAAGGAFAAAKTRAGSSAAGGGACARVAAGGRRRSGVVVR. Residues 134–137, Ser-194, 199–201, and Gln-205 contribute to the substrate site; these read TCNR and EGQ. Residue Cys-135 is the Nucleophile of the active site. Position 276–281 (276–281) interacts with NADP(+); it reads GAGKMG.

Belongs to the glutamyl-tRNA reductase family.

It is found in the plastid. The protein localises to the chloroplast. The catalysed reaction is (S)-4-amino-5-oxopentanoate + tRNA(Glu) + NADP(+) = L-glutamyl-tRNA(Glu) + NADPH + H(+). It functions in the pathway porphyrin-containing compound metabolism; protoporphyrin-IX biosynthesis; 5-aminolevulinate from L-glutamyl-tRNA(Glu): step 1/2. In terms of biological role, catalyzes the NADPH-dependent reduction of glutamyl-tRNA(Glu) to glutamate 1-semialdehyde (GSA). The sequence is that of Glutamyl-tRNA reductase, chloroplastic from Oryza sativa subsp. indica (Rice).